Consider the following 277-residue polypeptide: Thymidylate synthase (277 aa).

Residue Arg21 coordinates dUMP. His51 contributes to the (6R)-5,10-methylene-5,6,7,8-tetrahydrofolate binding site. Arg139 to Arg140 provides a ligand contact to dUMP. Residue Cys159 is the Nucleophile of the active site. DUMP-binding positions include Arg179–Asp182, Asn190, and His220–Tyr222. A (6R)-5,10-methylene-5,6,7,8-tetrahydrofolate-binding site is contributed by Asp182. Ala276 contacts (6R)-5,10-methylene-5,6,7,8-tetrahydrofolate.

The protein belongs to the thymidylate synthase family. Bacterial-type ThyA subfamily. In terms of assembly, homodimer.

It is found in the cytoplasm. It carries out the reaction dUMP + (6R)-5,10-methylene-5,6,7,8-tetrahydrofolate = 7,8-dihydrofolate + dTMP. The protein operates within pyrimidine metabolism; dTTP biosynthesis. Its function is as follows. Catalyzes the reductive methylation of 2'-deoxyuridine-5'-monophosphate (dUMP) to 2'-deoxythymidine-5'-monophosphate (dTMP) while utilizing 5,10-methylenetetrahydrofolate (mTHF) as the methyl donor and reductant in the reaction, yielding dihydrofolate (DHF) as a by-product. This enzymatic reaction provides an intracellular de novo source of dTMP, an essential precursor for DNA biosynthesis. The sequence is that of Thymidylate synthase from Ruegeria sp. (strain TM1040) (Silicibacter sp.).